A 301-amino-acid chain; its full sequence is 33 kDa chaperonin (301 aa).

Cystine bridges form between Cys-239–Cys-241 and Cys-272–Cys-275.

Belongs to the HSP33 family. Under oxidizing conditions two disulfide bonds are formed involving the reactive cysteines. Under reducing conditions zinc is bound to the reactive cysteines and the protein is inactive.

Its subcellular location is the cytoplasm. Its function is as follows. Redox regulated molecular chaperone. Protects both thermally unfolding and oxidatively damaged proteins from irreversible aggregation. Plays an important role in the bacterial defense system toward oxidative stress. This Nostoc sp. (strain PCC 7120 / SAG 25.82 / UTEX 2576) protein is 33 kDa chaperonin.